Consider the following 1584-residue polypeptide: Dicer-like protein 1 (1584 aa).

The disordered stretch occupies residues 31–60; that stretch reads EDVVSDNDDRGNASDVESEDGVKRWTVNPE. In terms of domain architecture, Helicase ATP-binding spans 129-310; the sequence is LFERAKQQNT…RAAAELEALL (182 aa). Position 142-149 (142-149) interacts with ATP; that stretch reads LDTGSGKT. A DEAH box motif is present at residues 255–258; that stretch reads DEAH. The Helicase C-terminal domain maps to 448-621; that stretch reads KVIMLVRILR…EALPEDRKLT (174 aa). Positions 654–744 constitute a Dicer dsRNA-binding fold domain; that stretch reads SLVCLANFTA…QSVFTKQLPE (91 aa). In terms of domain architecture, PAZ spans 894–1028; it reads KALAYVSENE…LILEPMRISP (135 aa). 2 RNase III domains span residues 1052-1207 and 1258-1424; these read VALD…LTGQ and AKKF…VDSE. Residues Glu1298, Asp1410, and Glu1413 each coordinate Mg(2+). The DRBM domain maps to 1458–1545; sequence TFVANMMAHK…AKKAIKLLEG (88 aa). Zn(2+) is bound by residues Cys1470, His1516, Cys1557, and Cys1559.

Belongs to the helicase family. Dicer subfamily. Mg(2+) is required as a cofactor. Mn(2+) serves as cofactor.

Functionally, dicer-like endonuclease involved in cleaving double-stranded RNA in the RNA interference (RNAi) pathway. Produces 21 to 25 bp dsRNAs (siRNAs) which target the selective destruction of homologous RNAs leading to sequence-specific suppression of gene expression, called post-transcriptional gene silencing (PTGS). Part of a broad host defense response against viral infection and transposons. Controls the expression of the non-LTR retrotransposon Tad in the African strain, Adiomopoume. In Neurospora crassa (strain ATCC 24698 / 74-OR23-1A / CBS 708.71 / DSM 1257 / FGSC 987), this protein is Dicer-like protein 1 (dcl-1).